The following is a 305-amino-acid chain: Ribonuclease Z (305 aa).

Residues His63, His65, Asp67, His68, His142, Asp209, and His267 each contribute to the Zn(2+) site. Asp67 functions as the Proton acceptor in the catalytic mechanism.

It belongs to the RNase Z family. As to quaternary structure, homodimer. Requires Zn(2+) as cofactor.

It catalyses the reaction Endonucleolytic cleavage of RNA, removing extra 3' nucleotides from tRNA precursor, generating 3' termini of tRNAs. A 3'-hydroxy group is left at the tRNA terminus and a 5'-phosphoryl group is left at the trailer molecule.. Zinc phosphodiesterase, which displays some tRNA 3'-processing endonuclease activity. Probably involved in tRNA maturation, by removing a 3'-trailer from precursor tRNA. This Nocardia farcinica (strain IFM 10152) protein is Ribonuclease Z.